The primary structure comprises 427 residues: Ribose-phosphate pyrophosphokinase 1 (427 aa).

Mg(2+) contacts are provided by Asp-128, His-130, and Asp-143. Phosphoserine is present on residues Ser-199, Ser-218, Ser-271, and Ser-295.

The protein belongs to the ribose-phosphate pyrophosphokinase family.

The protein resides in the cytoplasm. It carries out the reaction D-ribose 5-phosphate + ATP = 5-phospho-alpha-D-ribose 1-diphosphate + AMP + H(+). It functions in the pathway metabolic intermediate biosynthesis; 5-phospho-alpha-D-ribose 1-diphosphate biosynthesis; 5-phospho-alpha-D-ribose 1-diphosphate from D-ribose 5-phosphate (route I): step 1/1. In terms of biological role, 5-phosphoribose 1-diphosphate synthase involved in nucleotide, histidine, and tryptophan biosynthesis. Active in heteromultimeric complexes with other 5-phosphoribose 1-diphosphate synthases (PRS2, PRS3, PRS4 and PRS5). This chain is Ribose-phosphate pyrophosphokinase 1 (PRS1), found in Saccharomyces cerevisiae (strain ATCC 204508 / S288c) (Baker's yeast).